Here is a 545-residue protein sequence, read N- to C-terminus: Solute carrier family 22 member 6 (545 aa).

The Cytoplasmic portion of the chain corresponds to 1 to 9; that stretch reads MAFNDLLKQ. The helical transmembrane segment at 10-30 threads the bilayer; the sequence is VGGVGRFQLIQVTMVVAPLLL. The Extracellular portion of the chain corresponds to 31-129; sequence MASHNTLQNF…LVCSHRAFRQ (99 aa). Residues Asn39, Asn56, Asn86, Asn91, and Asn107 are each glycosylated (N-linked (GlcNAc...) asparagine). The helical transmembrane segment at 130-150 threads the bilayer; it reads LAQSLFMVGVLLGAMMFGYLA. The Cytoplasmic segment spans residues 151-157; it reads DRLGRRK. Residues 158–177 form a helical membrane-spanning segment; it reads VLILNYLQTAVSGTCAAYAP. N-linked (GlcNAc...) asparagine glycosylation is present at Asn178. The Extracellular segment spans residues 178–180; it reads NYT. The chain crosses the membrane as a helical span at residues 181–201; the sequence is VYCIFRLLSGMSLASIAINCM. Topologically, residues 202 to 218 are cytoplasmic; that stretch reads TLNMEWMPIHTRAYVGT. A helical transmembrane segment spans residues 219–239; sequence LIGYVYSLGQFLLAGIAYAVP. The Extracellular segment spans residues 240–242; sequence HWR. The chain crosses the membrane as a helical span at residues 243–263; sequence HLQLAVSVPFFVAFIYSWFFI. Residues 264 to 331 are Cytoplasmic-facing; the sequence is ESARWYSSSG…ELLRCPTLRR (68 aa). Residues 332–352 form a helical membrane-spanning segment; sequence LFLCLSMLWFATSFAYYGLVM. Residues 353–362 are Extracellular-facing; the sequence is DLQGFGVSMY. A helical transmembrane segment spans residues 363–383; the sequence is LIQVIFGAVDLPAKFVCFLVI. At 384-389 the chain is on the cytoplasmic side; the sequence is NSMGRR. Residues 390 to 410 form a helical membrane-spanning segment; sequence PAQLASLLLAGICILVNGIIP. Residues 411 to 419 are Extracellular-facing; sequence RGHTIIRTS. Residues 420-440 traverse the membrane as a helical segment; the sequence is LAVLGKGCLASSFNCIFLYTG. Residues 441–450 lie on the Cytoplasmic side of the membrane; it reads ELYPTMIRQT. The helical transmembrane segment at 451 to 471 threads the bilayer; it reads GLGMGSTMARVGSIVSPLISM. Topologically, residues 472-478 are extracellular; it reads TAEFYPS. The chain crosses the membrane as a helical span at residues 479–499; the sequence is IPLFIFGAVPVAASAVTALLP. The Cytoplasmic portion of the chain corresponds to 500-545; that stretch reads ETLGQPLPDTVQDLKSRSRGKQKQQQLEQQKQMIPLQVSTQEKNGL. The disordered stretch occupies residues 515-545; it reads SRSRGKQKQQQLEQQKQMIPLQVSTQEKNGL. Residues 522-531 show a composition bias toward low complexity; it reads KQQQLEQQKQ. Polar residues predominate over residues 536-545; the sequence is QVSTQEKNGL.

It belongs to the major facilitator (TC 2.A.1) superfamily. Organic cation transporter (TC 2.A.1.19) family. Post-translationally, glycosylated. Glycosylation is necessary for proper targeting of the transporter to the plasma membrane. As to expression, expressed in kidney. In kidney, restricted to the proximal convoluted tubule (representing S1 and S2 segments). In brain, expressed in neurons of the cortex cerebri and hippocampus as well as in the ependymal cell layer of the choroid plexus.

The protein localises to the basolateral cell membrane. The protein resides in the basal cell membrane. The catalysed reaction is (6R)-L-erythro-5,6,7,8-tetrahydrobiopterin(out) + a dicarboxylate(in) = (6R)-L-erythro-5,6,7,8-tetrahydrobiopterin(in) + a dicarboxylate(out). It carries out the reaction L-erythro-7,8-dihydrobiopterin(out) + a dicarboxylate(in) = L-erythro-7,8-dihydrobiopterin(in) + a dicarboxylate(out). It catalyses the reaction L-sepiapterin(out) + a dicarboxylate(in) = L-sepiapterin(in) + a dicarboxylate(out). The enzyme catalyses prostaglandin F2alpha(out) + a dicarboxylate(in) = prostaglandin F2alpha(in) + a dicarboxylate(out). The catalysed reaction is prostaglandin E2(out) + a dicarboxylate(in) = prostaglandin E2(in) + a dicarboxylate(out). It carries out the reaction 3',5'-cyclic AMP(out) + a dicarboxylate(in) = 3',5'-cyclic AMP(in) + a dicarboxylate(out). It catalyses the reaction 3',5'-cyclic GMP(out) + a dicarboxylate(in) = 3',5'-cyclic GMP(in) + a dicarboxylate(out). The enzyme catalyses urate(out) + a dicarboxylate(in) = urate(in) + a dicarboxylate(out). The catalysed reaction is kynurenate(out) + glutarate(in) = kynurenate(in) + glutarate(out). It carries out the reaction (indol-3-yl)acetate(out) + a dicarboxylate(in) = (indol-3-yl)acetate(in) + a dicarboxylate(out). It catalyses the reaction indoxyl sulfate(out) + a dicarboxylate(in) = indoxyl sulfate(in) + a dicarboxylate(out). The enzyme catalyses N-benzoylglycine(out) + a dicarboxylate(in) = N-benzoylglycine(in) + a dicarboxylate(out). The catalysed reaction is 3-carboxy-4-methyl-5-propyl-2-furanpropanoate(out) + a dicarboxylate(in) = 3-carboxy-4-methyl-5-propyl-2-furanpropanoate(in) + a dicarboxylate(out). In terms of biological role, secondary active transporter that functions as a Na(+)-independent organic anion (OA)/dicarboxylate antiporter where the uptake of one molecule of OA into the cell is coupled with an efflux of one molecule of intracellular dicarboxylate such as 2-oxoglutarate or glutarate. Mediates the uptake of OA across the basolateral side of proximal tubule epithelial cells, thereby contributing to the renal elimination of endogenous OA from the systemic circulation into the urine. Functions as a biopterin transporters involved in the uptake and the secretion of coenzymes tetrahydrobiopterin (BH4), dihydrobiopterin (BH2) and sepiapterin to urine, thereby determining baseline levels of blood biopterins. Transports prostaglandin E2 (PGE2) and prostaglandin F2-alpha (PGF2-alpha) and may contribute to their renal excretion. Involved in the transport of neuroactive tryptophan metabolites kynurenate (KYNA) and xanthurenate (XA). May transport glutamate. Also involved in the disposition of uremic toxins and potentially toxic xenobiotics by the renal organic anion secretory pathway, helping reduce their undesired toxicological effects on the body. Uremic toxins include the indoxyl sulfate (IS), hippurate/N-benzoylglycine (HA), indole acetate (IA) and 3-carboxy-4- methyl-5-propyl-2-furanpropionate(CMPF) and urate. Xenobiotics include the mycotoxin ochratoxin (OTA). May also contribute to the transport of organic compounds in testes across the blood-testis-barrier. The protein is Solute carrier family 22 member 6 of Mus musculus (Mouse).